The chain runs to 298 residues: Tyrosine recombinase XerD (298 aa).

In terms of domain architecture, Core-binding (CB) spans 2–87 (KQDLARIEQF…AVRRLFQYLY (86 aa)). One can recognise a Tyr recombinase domain in the interval 108–292 (RLPKDLSEAQ…ATERLRQLHQ (185 aa)). Active-site residues include R148, K172, H244, R247, and H270. The O-(3'-phospho-DNA)-tyrosine intermediate role is filled by Y279.

It belongs to the 'phage' integrase family. XerD subfamily. As to quaternary structure, forms a cyclic heterotetrameric complex composed of two molecules of XerC and two molecules of XerD, in which XerC interacts with XerD via its C-terminal region, XerD interacts with XerC via its C-terminal region and so on.

Its subcellular location is the cytoplasm. FtsK may regulate the catalytic switch between XerC and XerD in the heterotetrameric complex during the two steps of the recombination process. Functionally, site-specific tyrosine recombinase, which acts by catalyzing the cutting and rejoining of the recombining DNA molecules. Binds cooperatively to specific DNA consensus sequences that are separated from XerC binding sites by a short central region, forming the heterotetrameric XerC-XerD complex that recombines DNA substrates. The complex is essential to convert dimers of the bacterial chromosome into monomers to permit their segregation at cell division. It also contributes to the segregational stability of plasmids. In the complex XerD specifically exchanges the bottom DNA strands. This chain is Tyrosine recombinase XerD, found in Escherichia coli O157:H7.